We begin with the raw amino-acid sequence, 440 residues long: Lysine histidine transporter-like 6 (440 aa).

Over residues 1–10 the composition is skewed to polar residues; it reads MVSSSPVSPS. The disordered stretch occupies residues 1 to 25; that stretch reads MVSSSPVSPSKETDRKSGEKWTAED. Topologically, residues 1 to 31 are cytoplasmic; it reads MVSSSPVSPSKETDRKSGEKWTAEDPSRPAK. The segment covering 11 to 25 has biased composition (basic and acidic residues); sequence KETDRKSGEKWTAED. A helical membrane pass occupies residues 32 to 51; sequence WWYSTFHTVTAMIGAGVLSL. At 52–61 the chain is on the extracellular side; the sequence is PYAMAYLGWG. The chain crosses the membrane as a helical span at residues 62–82; the sequence is PGTFVLAMTWGLTLNTMWQMV. At 83–109 the chain is on the cytoplasmic side; it reads QLHECVPGTRFDRYIDLGRYAFGPKLG. A helical transmembrane segment spans residues 110–130; sequence PWIVLPQQLIVQVGCNIVYMV. Residues 131–152 are Extracellular-facing; sequence TGGKCLKQFVEITCSTCTPVRQ. A helical membrane pass occupies residues 153-173; it reads SYWILGFGGVHFILSQLPNFN. Residue S174 is a topological domain, cytoplasmic. The chain crosses the membrane as a helical span at residues 175 to 195; sequence VAGVSLAAAVMSLCYSTIAWG. At 196 to 221 the chain is on the extracellular side; sequence GSIAHGRVPDVSYDYKATNPGDFTFR. A helical transmembrane segment spans residues 222-242; it reads VFNALGQISFAFAGHAVALEI. Residues 243 to 261 are Cytoplasmic-facing; sequence QATMPSTPERPSKVPMWQG. The helical transmembrane segment at 262–282 threads the bilayer; sequence VIGAYVVNAVCYFPVALICYW. At 283-300 the chain is on the extracellular side; that stretch reads AFGQDVDDNVLMNLQRPA. The helical transmembrane segment at 301-321 threads the bilayer; sequence WLIAAANLMVVVHVIGSYQVF. The Cytoplasmic portion of the chain corresponds to 322–353; sequence AMPVFDLLERMMVNKFGFKHGVVLRFFTRTIY. Helical transmembrane passes span 354-374 and 375-395; these read VAFT…LGFF and GGFG…LIIK. Over 396-399 the chain is Cytoplasmic; the sequence is KPRR. The chain crosses the membrane as a helical span at residues 400–420; the sequence is FSVTWFVNWISIIVGVFIMLA. The Extracellular portion of the chain corresponds to 421 to 440; sequence STIGGLRNIIADSSTYSFYA.

The protein belongs to the amino acid/polyamine transporter 2 family. Amino acid/auxin permease (AAAP) (TC 2.A.18.2) subfamily.

It is found in the cell membrane. Amino acid transporter. The chain is Lysine histidine transporter-like 6 from Arabidopsis thaliana (Mouse-ear cress).